The primary structure comprises 232 residues: MALIRDRKSHHSEMSKCHNYDLKPAKWDTSQEQQKQRLALTTSQPGENGIIRGRYPIEKLKISPMFVVRVLAIALAIRFTLNTLMWLAIFKETFQPVLCNKEVPVSSREGYCGPCPNNWICHRNNCYQFFNEEKTWNQSQASCLSQNSSLLKIYSKEEQDFLKLVKSYHWMGLVQIPANGSWQWEDGSSLSYNQLTLVEIPKGSCAVYGSSFKAYTEDCANLNTYICMKRAV.

At 1–66 (MALIRDRKSH…IEKLKISPMF (66 aa)) the chain is on the cytoplasmic side. A helical; Signal-anchor for type II membrane protein membrane pass occupies residues 67–89 (VVRVLAIALAIRFTLNTLMWLAI). At 90 to 232 (FKETFQPVLC…NTYICMKRAV (143 aa)) the chain is on the extracellular side. Cystine bridges form between C112/C121 and C115/C126. The region spanning 122-228 (HRNNCYQFFN…CANLNTYICM (107 aa)) is the C-type lectin domain. N137, N147, and N179 each carry an N-linked (GlcNAc...) asparagine glycan. Disulfide bonds link C143–C227 and C205–C219.

In terms of assembly, homodimer; disulfide-linked. Heterohexamer composed of two subunits of KLRK1 and four subunits of HCST/DAP10. Isoform 1 (via transmembrane domain) interacts with HCST/DAP10; the interaction is required for KLRK1 cell surface expression on activated CD8(+) T-cells, but is dispensable on activated TYROBP-expressing NK cells. Isoform 2 (via transmembrane domain) interacts with HCST/DAP10 (via transmembrane domain); the interaction is required for KLRK1 NK cell surface expression and induces NK cell-mediated cytotoxicity. Isoform 2 (via transmembrane domain) interacts with TYROBP (via transmembrane domain); the interaction is required for KLRK1 NK cell surface expression and induce NK cell-mediated cytotoxicity and cytokine secretion. Isoform 1 does not interact with TYROBP. Interacts with CEACAM1; recruits PTPN6 that dephosphorylates VAV1. In terms of tissue distribution, expressed in natural killer (NK) cells, activated CD8(+) alpha-beta and gamma-delta T-cells and natural killer T (NKT) cells (at protein level). May be expressed on dendritic cell (DC). Isoform 1 is strongly expressed in natural killer (NK) cells. Isoform 2 is weakly expressed in natural killer (NK) cells. Isoform 1 and isoform 2 are expressed in stimulated, but not in unstimulated, CD8(+) T-cells and macrophages.

It localises to the cell membrane. Functionally, functions as an activating and costimulatory receptor involved in immunosurveillance upon binding to various cellular stress-inducible ligands displayed at the surface of autologous tumor cells and virus-infected cells. Provides both stimulatory and costimulatory innate immune responses on activated killer (NK) cells, leading to cytotoxic activity. Acts as a costimulatory receptor for T-cell receptor (TCR) in CD8(+) T-cell-mediated adaptive immune responses by amplifying T-cell activation. Stimulates perforin-mediated elimination of ligand-expressing tumor cells. Signaling involves calcium influx, culminating in the expression of TNF-alpha. Participates in NK cell-mediated bone marrow graft rejection. May play a regulatory role in differentiation and survival of NK cells. Binds to ligands belonging to various subfamilies of MHC class I-related glycoproteins including RAET1A, RAET1B, RAET1C, RAET1D, RAET1E, H60 and MULT1. The sequence is that of NKG2-D type II integral membrane protein (Klrk1) from Mus musculus (Mouse).